We begin with the raw amino-acid sequence, 140 residues long: Nucleoside diphosphate kinase (140 aa).

ATP contacts are provided by Lys11, Phe59, Arg87, Thr93, Arg104, and Asn114. His117 serves as the catalytic Pros-phosphohistidine intermediate.

This sequence belongs to the NDK family. As to quaternary structure, homotetramer. Mg(2+) is required as a cofactor.

It localises to the cytoplasm. It catalyses the reaction a 2'-deoxyribonucleoside 5'-diphosphate + ATP = a 2'-deoxyribonucleoside 5'-triphosphate + ADP. The catalysed reaction is a ribonucleoside 5'-diphosphate + ATP = a ribonucleoside 5'-triphosphate + ADP. In terms of biological role, major role in the synthesis of nucleoside triphosphates other than ATP. The ATP gamma phosphate is transferred to the NDP beta phosphate via a ping-pong mechanism, using a phosphorylated active-site intermediate. In Ruegeria pomeroyi (strain ATCC 700808 / DSM 15171 / DSS-3) (Silicibacter pomeroyi), this protein is Nucleoside diphosphate kinase.